Consider the following 440-residue polypeptide: Thymidine phosphorylase (440 aa).

Belongs to the thymidine/pyrimidine-nucleoside phosphorylase family. In terms of assembly, homodimer.

It catalyses the reaction thymidine + phosphate = 2-deoxy-alpha-D-ribose 1-phosphate + thymine. It functions in the pathway pyrimidine metabolism; dTMP biosynthesis via salvage pathway; dTMP from thymine: step 1/2. In terms of biological role, the enzymes which catalyze the reversible phosphorolysis of pyrimidine nucleosides are involved in the degradation of these compounds and in their utilization as carbon and energy sources, or in the rescue of pyrimidine bases for nucleotide synthesis. In Cronobacter sakazakii (strain ATCC BAA-894) (Enterobacter sakazakii), this protein is Thymidine phosphorylase.